The primary structure comprises 423 residues: MAKEKEHINLAFIGHVDHGKSTLVGRLLYDTGVIEDKDLGEGEDKFRVIMDTLEEERERGVTIDLAHTKFETDNYEFTIVDCPGHRDFVKNMITGASQADAAILVVAADDGVMPQTKEHAFLAKTLGIDQLIVAINKMDLVDYDENRYEEVKQEVAELLKTIGYNVDEIPFIPISAFEGDNVVEKSDNTPWYDGPTLLEALDNLEPPEKPTDKPLRIPIQDVYSITGVGTVPVGRVETGVLEVGDTVRFEPAYTATGGRKGEGEVRSIEMHHEEIERAEPGDNIGFNVKGVGKNDISRGDVACHPDEPATVVTPDDTFIAQIVVLQHPSAITAGYTPVFHCHTAQVACKFEELIEKIDPATGEVIEENPDFLKTGEAAKVRIRPTKPMVIEEVSFIPQLGRFAIRDMGQTVAAGMCVKIEKEE.

Residues 5-211 enclose the tr-type G domain; the sequence is KEHINLAFIG…DNLEPPEKPT (207 aa). The interval 14-21 is G1; sequence GHVDHGKS. GTP is bound at residue 14–21; that stretch reads GHVDHGKS. S21 is a Mg(2+) binding site. Positions 60 to 64 are G2; sequence GVTID. The interval 81–84 is G3; that stretch reads DCPG. GTP contacts are provided by residues 81–85 and 136–139; these read DCPGH and NKMD. The tract at residues 136 to 139 is G4; it reads NKMD. Residues 175 to 177 form a G5 region; sequence SAF.

It belongs to the TRAFAC class translation factor GTPase superfamily. Classic translation factor GTPase family. EF-Tu/EF-1A subfamily.

It localises to the cytoplasm. It catalyses the reaction GTP + H2O = GDP + phosphate + H(+). GTP hydrolase that promotes the GTP-dependent binding of aminoacyl-tRNA to the A-site of ribosomes during protein biosynthesis. This Methanopyrus kandleri (strain AV19 / DSM 6324 / JCM 9639 / NBRC 100938) protein is Elongation factor 1-alpha.